We begin with the raw amino-acid sequence, 121 residues long: Aspartate 1-decarboxylase (121 aa).

The active-site Schiff-base intermediate with substrate; via pyruvic acid is serine 25. Serine 25 is modified (pyruvic acid (Ser)). Threonine 57 is a substrate binding site. Residue tyrosine 58 is the Proton donor of the active site. Position 73–75 (73–75 (GAA)) interacts with substrate.

Belongs to the PanD family. Heterooctamer of four alpha and four beta subunits. It depends on pyruvate as a cofactor. In terms of processing, is synthesized initially as an inactive proenzyme, which is activated by self-cleavage at a specific serine bond to produce a beta-subunit with a hydroxyl group at its C-terminus and an alpha-subunit with a pyruvoyl group at its N-terminus.

It localises to the cytoplasm. It catalyses the reaction L-aspartate + H(+) = beta-alanine + CO2. The protein operates within cofactor biosynthesis; (R)-pantothenate biosynthesis; beta-alanine from L-aspartate: step 1/1. In terms of biological role, catalyzes the pyruvoyl-dependent decarboxylation of aspartate to produce beta-alanine. This Maricaulis maris (strain MCS10) (Caulobacter maris) protein is Aspartate 1-decarboxylase.